A 118-amino-acid chain; its full sequence is Small ribosomal subunit protein uS19c (118 aa).

Positions 92-118 (KKSSKKVTKNKKSIKKNIKTTSKKFKK) are disordered.

The protein belongs to the universal ribosomal protein uS19 family.

It localises to the plastid. Functionally, protein S19 forms a complex with S13 that binds strongly to the 16S ribosomal RNA. The sequence is that of Small ribosomal subunit protein uS19c (rps19) from Euglena longa (Euglenophycean alga).